The chain runs to 131 residues: Small ribosomal subunit protein uS8 (131 aa).

It belongs to the universal ribosomal protein uS8 family. As to quaternary structure, part of the 30S ribosomal subunit. Contacts proteins S5 and S12.

Functionally, one of the primary rRNA binding proteins, it binds directly to 16S rRNA central domain where it helps coordinate assembly of the platform of the 30S subunit. This Campylobacter jejuni (strain RM1221) protein is Small ribosomal subunit protein uS8.